The sequence spans 60 residues: uncharacterized protein (60 aa).

This is an uncharacterized protein from Archaeoglobus fulgidus (strain ATCC 49558 / DSM 4304 / JCM 9628 / NBRC 100126 / VC-16).